The primary structure comprises 920 residues: Nitrate reductase [NADH] (920 aa).

Positions 1-69 are disordered; that stretch reads MAASVENRQF…DTSDDEEDEA (69 aa). Positions 60-69 are enriched in acidic residues; sequence DTSDDEEDEA. Cysteine 185 contacts Mo-molybdopterin. Residues 534–609 form the Cytochrome b5 heme-binding domain; that stretch reads SLTFTMSEVK…LEEYRVGELI (76 aa). Residues histidine 569 and histidine 592 each contribute to the heme site. Residues 663-775 form the FAD-binding FR-type domain; sequence REKIPCKLIS…KGPLGHIEYM (113 aa). FAD-binding positions include 715 to 718, 732 to 736, phenylalanine 737, phenylalanine 744, 749 to 751, and threonine 802; these read RAYT, LVKIY, and LMS.

Belongs to the nitrate reductase family. Homodimer. FAD serves as cofactor. It depends on heme as a cofactor. The cofactor is Mo-molybdopterin. In cortical cells of roots grown at low nitrate concentrations, in vascular tissues of roots at high nitrate concentrations and in root apex under both conditions.

It carries out the reaction nitrite + NAD(+) + H2O = nitrate + NADH + H(+). Nitrate reductase is a key enzyme involved in the first step of nitrate assimilation in plants, fungi and bacteria. The polypeptide is Nitrate reductase [NADH] (NIA) (Cichorium intybus (Chicory)).